A 483-amino-acid chain; its full sequence is Aspartyl/glutamyl-tRNA(Asn/Gln) amidotransferase subunit B (483 aa).

Belongs to the GatB/GatE family. GatB subfamily. Heterotrimer of A, B and C subunits.

The catalysed reaction is L-glutamyl-tRNA(Gln) + L-glutamine + ATP + H2O = L-glutaminyl-tRNA(Gln) + L-glutamate + ADP + phosphate + H(+). It carries out the reaction L-aspartyl-tRNA(Asn) + L-glutamine + ATP + H2O = L-asparaginyl-tRNA(Asn) + L-glutamate + ADP + phosphate + 2 H(+). Functionally, allows the formation of correctly charged Asn-tRNA(Asn) or Gln-tRNA(Gln) through the transamidation of misacylated Asp-tRNA(Asn) or Glu-tRNA(Gln) in organisms which lack either or both of asparaginyl-tRNA or glutaminyl-tRNA synthetases. The reaction takes place in the presence of glutamine and ATP through an activated phospho-Asp-tRNA(Asn) or phospho-Glu-tRNA(Gln). In Rickettsia felis (strain ATCC VR-1525 / URRWXCal2) (Rickettsia azadi), this protein is Aspartyl/glutamyl-tRNA(Asn/Gln) amidotransferase subunit B.